A 184-amino-acid polypeptide reads, in one-letter code: Cytidylate kinase (184 aa).

8-16 (GQPGSGKTT) is a binding site for ATP.

The protein belongs to the cytidylate kinase family. Type 2 subfamily.

It localises to the cytoplasm. It carries out the reaction CMP + ATP = CDP + ADP. The catalysed reaction is dCMP + ATP = dCDP + ADP. The chain is Cytidylate kinase from Pyrobaculum neutrophilum (strain DSM 2338 / JCM 9278 / NBRC 100436 / V24Sta) (Thermoproteus neutrophilus).